Here is a 130-residue protein sequence, read N- to C-terminus: Small ribosomal subunit protein uS11c (130 aa).

This sequence belongs to the universal ribosomal protein uS11 family. Part of the 30S ribosomal subunit.

The protein localises to the plastid. It is found in the chloroplast. This is Small ribosomal subunit protein uS11c from Nephroselmis olivacea (Green alga).